Consider the following 371-residue polypeptide: MELSEIKRNIDEYRNNLAQIRGSLDFENKETNIQEYEEMMTEPDFWDDQNKAQDVIDKNNALKSVVNGYHELEEEVEDMTATWELLQEELDGDVKSDLEQNVLDFKEKVDQFELQLLLDGPHDANNAILELHPGAGGTESQDWASMLLRMYQRYGEQQGFKVETVDYLPGDEAGVKSVTLLIKGHNAYGYLKAEKGVHRLVRISPFDSSGRRHTSFASCDVIPEFNNDEIEIEINPDDITVDTFRASGAGGQHINKTESAIRITHHPTGIVVNNQNERSQIKNREAAMKMLKAKLYQLKLEEQEREMAEIRGEQKEIGWGSQIRSYVFHPYSMVKDHRTNEETGKVDAVMDGEIGPFIESYLRYTMNQSDN.

N5-methylglutamine is present on Q252.

Belongs to the prokaryotic/mitochondrial release factor family. Methylated by PrmC. Methylation increases the termination efficiency of RF2.

It is found in the cytoplasm. Its function is as follows. Peptide chain release factor 2 directs the termination of translation in response to the peptide chain termination codons UGA and UAA. This Staphylococcus haemolyticus (strain JCSC1435) protein is Peptide chain release factor 2.